A 254-amino-acid polypeptide reads, in one-letter code: Hydroxypyruvate/pyruvate aldolase (254 aa).

The Proton acceptor role is filled by H47. A divalent metal cation contacts are provided by E151 and D177.

It belongs to the HpcH/HpaI aldolase family. A divalent metal cation is required as a cofactor.

The catalysed reaction is D-glyceraldehyde + pyruvate = 2-dehydro-3-deoxy-L-galactonate. Aldolase which can catalyze in vitro the aldolisation reaction between hydroxypyruvate (HPA) or pyruvate (PA) and D-glyceraldehyde (D-GA). The condensation of pyruvate and D-glyceraldehyde produces 2-dehydro-3-deoxy-L-galactonate as the major product. Has weak activity with hydroxypyruvate and D-glyceraldehyde. This is Hydroxypyruvate/pyruvate aldolase from Chromohalobacter salexigens (strain ATCC BAA-138 / DSM 3043 / CIP 106854 / NCIMB 13768 / 1H11).